We begin with the raw amino-acid sequence, 499 residues long: Serine/threonine-protein phosphatase 5 (499 aa).

Residues 1-23 form a disordered region; sequence MAMAEGERTECAEPPRDEPPADG. Ala-2 carries the N-acetylalanine modification. 3 TPR repeats span residues 28–61, 62–95, and 96–129; these read AEEL…NPSN, AIYY…DKKY, and IKGY…KPHD. A catalytic region spans residues 184 to 499; that stretch reads GKVTISFMKE…ANTLLQLGMM (316 aa). Positions 242, 244, and 271 each coordinate Mn(2+). His-244 contacts substrate. Substrate contacts are provided by residues Arg-275 and 303–304; that span reads NH. Position 303 (Asn-303) interacts with Mn(2+). The active-site Proton donor/acceptor is the His-304. His-352 provides a ligand contact to Mn(2+). Substrate contacts are provided by Arg-400 and His-427. His-427 lines the Mn(2+) pocket. Residues 495 to 499 are required for autoinhibition; it reads QLGMM.

It belongs to the PPP phosphatase family. PP-5 (PP-T) subfamily. As to quaternary structure, probably forms a complex composed of chaperones HSP90 and HSP70, co-chaperones STIP1/HOP, CDC37, PPP5C, PTGES3/p23, TSC1 and client protein TSC2. Probably forms a complex composed of chaperones HSP90 and HSP70, co-chaperones CDC37, PPP5C, TSC1 and client protein TSC2, CDK4, AKT, RAF1 and NR3C1; this complex does not contain co-chaperones STIP1/HOP and PTGES3/p23. Part of a complex with HSP90/HSP90AA1 and steroid receptors. Interacts (via TPR repeats) with HSP90AA1 (via TPR repeat-binding motif) or HSPA1A/HSPA1B; the interaction is direct and activates the phosphatase activity. Dissociates from HSPA1A/HSPA1B and HSP90AA1 in response to arachidonic acid. Interacts with CPNE1 (via VWFA domain). Interacts with CDC16, CDC27. Interacts with KLHDC10 (via the 6 Kelch repeats); inhibits the phosphatase activity on MAP3K5. Interacts with ATM and ATR; both interactions are induced by DNA damage and enhance ATM and ATR kinase activity. Interacts with RAD17; reduced by DNA damage. Interacts with nuclear receptors such as NR3C1/GCR and PPARG (activated by agonist); regulates their transactivation activities. Interacts (via TPR repeats) with S100 proteins S100A1, S100A2, S100A6, S100B and S100P; the interactions are calcium-dependent, strongly activate PPP5C phosphatase activity and compete with HSP90AA1 and MAP3K5 interactions. Interacts with SMAD2 and SMAD3 but not with SMAD1; decreases SMAD3 phosphorylation and protein levels. Interacts (via TPR repeats) with CRY1 and CRY2; the interaction with CRY2 down-regulates the phosphatase activity on CSNK1E. Interacts (via TPR repeats) with the active form of RAC1, GNA12 or GNA13; these interactions activate the phosphatase activity and translocate PPP5C to the cell membrane. Interacts with FLCN. Mg(2+) is required as a cofactor. Mn(2+) serves as cofactor. Activated by at least two different proteolytic cleavages producing a 56 kDa and a 50 kDa form. In terms of tissue distribution, ubiquitous.

Its subcellular location is the nucleus. It localises to the cytoplasm. The protein localises to the cell membrane. It catalyses the reaction O-phospho-L-seryl-[protein] + H2O = L-seryl-[protein] + phosphate. The catalysed reaction is O-phospho-L-threonyl-[protein] + H2O = L-threonyl-[protein] + phosphate. Its activity is regulated as follows. Autoinhibited. In the autoinhibited state, the TPR domain interacts with the catalytic region and prevents substrate access to the catalytic pocket. Allosterically activated by various polyunsaturated fatty acids, free long-chain fatty-acids and long-chain fatty acyl-CoA esters, arachidonic acid being the most effective activator. HSP90A and probably RAC1, GNA12 and GNA13 can also release the autoinhibition by the TPR repeat. Activation by RAC1, GNA12 and GNA13 is synergistic with the one produced by fatty acids binding. Inhibited by okadaic acid. Its function is as follows. Serine/threonine-protein phosphatase that dephosphorylates a myriad of proteins involved in different signaling pathways including the kinases CSNK1E, ASK1/MAP3K5, PRKDC and RAF1, the nuclear receptors NR3C1, PPARG, ESR1 and ESR2, SMAD proteins and TAU/MAPT. Implicated in wide ranging cellular processes, including apoptosis, differentiation, DNA damage response, cell survival, regulation of ion channels or circadian rhythms, in response to steroid and thyroid hormones, calcium, fatty acids, TGF-beta as well as oxidative and genotoxic stresses. Participates in the control of DNA damage response mechanisms such as checkpoint activation and DNA damage repair through, for instance, the regulation ATM/ATR-signaling and dephosphorylation of PRKDC and TP53BP1. Inhibits ASK1/MAP3K5-mediated apoptosis induced by oxidative stress. Plays a positive role in adipogenesis, mainly through the dephosphorylation and activation of PPARG transactivation function. Also dephosphorylates and inhibits the anti-adipogenic effect of NR3C1. Regulates the circadian rhythms, through the dephosphorylation and activation of CSNK1E. May modulate TGF-beta signaling pathway by the regulation of SMAD3 phosphorylation and protein expression levels. Dephosphorylates and may play a role in the regulation of TAU/MAPT. Through their dephosphorylation, may play a role in the regulation of ions channels such as KCNH2. Dephosphorylate FNIP1, disrupting interaction with HSP90AA1/Hsp90. The chain is Serine/threonine-protein phosphatase 5 (PPP5C) from Homo sapiens (Human).